The chain runs to 304 residues: MNIVFSRDSQVRVMENTVANTEKYFGQFCSLLAAYTRKTARLRDKADQLVKQLIDFANSENPELRATMRGFAEDLAKVQDYRQAQVERLETKVVNPLKLYGAQIKQTRAEIKKFKHVQNHEIKQLEKLEKLRQKSPSDQQMIGQAETRVQRAAVDSSRTTLQLEETVDGFQRQKLKDLQKFFCDFVTIEMVFHAKAVEVYSSAFQTLEKYDLERDLLDFRAKMQGVYGHYDTRLLANTSPPPSVLQSLASQGTLQVQLSRANEDPEHPHANHGRFSLCEWVVKGQPAHCVCGQGGHLMLPGHSL.

The interval 6 to 217 (SRDSQVRVME…EKYDLERDLL (212 aa)) is BAR-like.

The protein belongs to the CIBAR family. As to quaternary structure, homodimer (via BAR-like domain). Heterodimer (via BAR-like domain) with FAM92A. Interacts with CBY1. In terms of tissue distribution, restricted to certain tissues, most prominently expressed in multicilaited tissues.

The protein resides in the cytoplasm. It is found in the cytoskeleton. Its subcellular location is the microtubule organizing center. The protein localises to the centrosome. It localises to the centriole. The protein resides in the cilium basal body. Its function is as follows. May play a role in ciliogenesis. In cooperation with CBY1 may facilitate ciliogenesis likely by the recruitment and fusion of endosomal vesicles at distal appendages during early stages of ciliogenesis. This chain is CBY1-interacting BAR domain-containing protein 2, found in Homo sapiens (Human).